The following is a 495-amino-acid chain: ATP synthase subunit beta, chloroplastic (495 aa).

Position 172 to 179 (172 to 179 (GGAGVGKT)) interacts with ATP.

Belongs to the ATPase alpha/beta chains family. F-type ATPases have 2 components, CF(1) - the catalytic core - and CF(0) - the membrane proton channel. CF(1) has five subunits: alpha(3), beta(3), gamma(1), delta(1), epsilon(1). CF(0) has four main subunits: a(1), b(1), b'(1) and c(9-12).

The protein localises to the plastid. It localises to the chloroplast thylakoid membrane. The catalysed reaction is ATP + H2O + 4 H(+)(in) = ADP + phosphate + 5 H(+)(out). Functionally, produces ATP from ADP in the presence of a proton gradient across the membrane. The catalytic sites are hosted primarily by the beta subunits. The polypeptide is ATP synthase subunit beta, chloroplastic (Pteridium aquilinum (Bracken fern)).